Here is a 376-residue protein sequence, read N- to C-terminus: Chaperone protein DnaJ (376 aa).

The 65-residue stretch at 5–69 folds into the J domain; that stretch reads DYYEVLGISK…QKRAQYDQYG (65 aa). The CR-type zinc finger occupies 133 to 215; it reads GKDAEIEIPR…CHGKGRVTKT (83 aa). Residues C146, C149, C163, C166, C189, C192, C203, and C206 each contribute to the Zn(2+) site. CXXCXGXG motif repeat units lie at residues 146-153, 163-170, 189-196, and 203-210; these read CDTCHGSG, CSHCGGKG, CQYCNGTG, and CSTCHGKG.

The protein belongs to the DnaJ family. In terms of assembly, homodimer. It depends on Zn(2+) as a cofactor.

It is found in the cytoplasm. Functionally, participates actively in the response to hyperosmotic and heat shock by preventing the aggregation of stress-denatured proteins and by disaggregating proteins, also in an autonomous, DnaK-independent fashion. Unfolded proteins bind initially to DnaJ; upon interaction with the DnaJ-bound protein, DnaK hydrolyzes its bound ATP, resulting in the formation of a stable complex. GrpE releases ADP from DnaK; ATP binding to DnaK triggers the release of the substrate protein, thus completing the reaction cycle. Several rounds of ATP-dependent interactions between DnaJ, DnaK and GrpE are required for fully efficient folding. Also involved, together with DnaK and GrpE, in the DNA replication of plasmids through activation of initiation proteins. The polypeptide is Chaperone protein DnaJ (Listeria welshimeri serovar 6b (strain ATCC 35897 / DSM 20650 / CCUG 15529 / CIP 8149 / NCTC 11857 / SLCC 5334 / V8)).